A 282-amino-acid chain; its full sequence is Phosphoglycerate mutase-like protein 1 (282 aa).

His23 serves as the catalytic Tele-phosphohistidine intermediate. Residue Glu135 is the Proton donor/acceptor of the active site.

The protein belongs to the phosphoglycerate mutase family.

Functionally, may play a role in carbohydrates metabolism. In Arabidopsis thaliana (Mouse-ear cress), this protein is Phosphoglycerate mutase-like protein 1.